Consider the following 475-residue polypeptide: MTQPVARDTAGTFSDYCISDISLAAWGRKEMIIAETEMPGLMAIREEYAATRPLQGARIAGSLHMTIQTAMLIETLVALGAEVRWASCNIFSTQDHAAAAIAAAGIPVFAYKGESLEEYWEFTHRIFEWHDGGTPNMILDDGGDATLLLHLGSDAEKDPSVIANPTCEEEQYLFASIKKRLAEKPGWYSKTAAAIKGVTEETTTGVHRLYQMHEKGKLKFPAINVNDSVTKSKFDNIYGCRESLVDGIKRATDVMIAGKVAVICGYGEVGKGCAQAMRGLQAQVWVTEIDPICALQAAMEGYRVVTMEYAADKADIFVTTTGNINVITHDHMKAMRHNAIVCNIGHFDNEIEVAALKQYQWENIKPQVDHIIFPDSKRIILLAEGRLVNLGCATGHPSYVMSSSFANQTLAQIELFCNPGKYPVGVYMLPKELDEKVARLQLKTLGAMLTELTDEQAAYIGVPKNGPYKSAHYRY.

Positions 66, 141, and 201 each coordinate substrate. Residue 202-204 (TTT) coordinates NAD(+). The substrate site is built by Lys231 and Asp235. NAD(+)-binding positions include Asn236, 265-270 (GYGEVG), Glu288, Asn323, 344-346 (IGH), and Asn389.

This sequence belongs to the adenosylhomocysteinase family. NAD(+) serves as cofactor.

The protein localises to the cytoplasm. The enzyme catalyses S-adenosyl-L-homocysteine + H2O = L-homocysteine + adenosine. It participates in amino-acid biosynthesis; L-homocysteine biosynthesis; L-homocysteine from S-adenosyl-L-homocysteine: step 1/1. Functionally, may play a key role in the regulation of the intracellular concentration of adenosylhomocysteine. The chain is Adenosylhomocysteinase from Geobacter sulfurreducens (strain ATCC 51573 / DSM 12127 / PCA).